We begin with the raw amino-acid sequence, 555 residues long: Bifunctional epoxide hydrolase 2 (555 aa).

The tract at residues 1–224 (MALRAAVFDL…KVTGVQLLQT (224 aa)) is phosphatase. 2 residues coordinate Mg(2+): Asp-9 and Asp-11. Position 43 is an N6-acetyllysine (Lys-43). Residue 123 to 124 (TN) participates in phosphate binding. Mg(2+) is bound at residue Asp-185. N6-acetyllysine occurs at positions 191 and 215. The tract at residues 235–555 (SALSHGYVLI…ARNPLVDSKL (321 aa)) is epoxide hydrolase. The AB hydrolase-1 domain maps to 259–531 (PAVCLCHGFP…CGHWTQIDKP (273 aa)). Residue Asp-335 is the Nucleophile of the active site. Ser-370 is subject to Phosphoserine. Position 383 (Tyr-383) interacts with substrate. At Lys-455 the chain carries N6-succinyllysine. Catalysis depends on Tyr-466, which acts as the Proton donor. Position 505 is an N6-succinyllysine (Lys-505). Cys-522 carries S-(15-deoxy-Delta12,14-prostaglandin J2-9-yl)cysteine lipidation. His-524 acts as the Proton acceptor in catalysis. The short motif at 553 to 555 (SKL) is the Microbody targeting signal element. Lys-554 bears the N6-succinyllysine mark.

It belongs to the AB hydrolase superfamily. Epoxide hydrolase family. As to quaternary structure, homodimer. Mg(2+) is required as a cofactor. The covalent modification of cysteine by 15-deoxy-Delta12,14-prostaglandin-J2 is autocatalytic and reversible. It may occur as an alternative to other cysteine modifications, such as S-nitrosylation and S-palmitoylation.

It is found in the cytoplasm. Its subcellular location is the peroxisome. The enzyme catalyses an epoxide + H2O = an ethanediol. The catalysed reaction is (9S,10S)-10-hydroxy-9-(phosphooxy)octadecanoate + H2O = (9S,10S)-9,10-dihydroxyoctadecanoate + phosphate. It catalyses the reaction (14R,15S)-epoxy-(5Z,8Z,11Z)-eicosatrienoate + H2O = (14R,15R)-dihydroxy-(5Z,8Z,11Z)-eicosatrienoate. Inhibited by 1-(1-acetylpiperidin-4-yl)-3-(4-(trifl uoromethoxy)phenyl)urea (TPAU), 1-cyclohexyl-3-dodecylurea (CDU), 12-(3-adamantan-1-yl-ureido)-dodecanoic acid (AUDA), 1-((3S, 5S, 7S)-adamantan-1-yl)-3-(5-(2-(2-ethoxyethoxy) ethoxy)pentyl)urea (AEPU), N-adamantyl-N[']-cyclohexyl urea (ACU), 4-(((1S, 4S)-4-(3-((3S, 5S, 7S)-adamantan-1-yl) ureido)cyclohexyl)oxy)benzoic acid (c-AUCB), 4-(((1R, 4R)-4-(3-((3S, 5S, 7S)-adamantan-1-yl)ureido)cyclohexyl)oxy)benzoic acid (t-AUCB), 4-(((1R, 4R)-4-(3-(4(trifluoromethoxy)phenyl)ureido)cyclohexyl)oxy)benzoic acid (t-TAUCB) and to a lesser extent by 8-(3-((3S, 5S, 7S)-adamantan-1-yl)ureido) octanoic acid (AUOA). Functionally, bifunctional enzyme. The C-terminal domain has epoxide hydrolase activity and acts on epoxides (alkene oxides, oxiranes) and arene oxides. Plays a role in xenobiotic metabolism by degrading potentially toxic epoxides. Also determines steady-state levels of physiological mediators. The N-terminal domain has lipid phosphatase activity, with the highest activity towards threo-9,10-phosphonooxy-hydroxy-octadecanoic acid, followed by erythro-9,10-phosphonooxy-hydroxy-octadecanoic acid, 12-phosphonooxy-octadec-9Z-enoic acid and 12-phosphonooxy-octadec-9E-enoic acid. The protein is Bifunctional epoxide hydrolase 2 (EPHX2) of Sus scrofa (Pig).